Here is a 299-residue protein sequence, read N- to C-terminus: Cycloserine biosynthesis protein DcsG (299 aa).

K92, K137, S144, Q175, P176, and V178 together coordinate ATP. Residues 95-298 (LADLAAHGVP…FAQALAERLK (204 aa)) form the ATP-grasp domain. Residues R220 and R254 contribute to the active site. E269 and E271 together coordinate Mg(2+). The active site involves E271.

In terms of assembly, monomer. Mg(2+) serves as cofactor.

It catalyses the reaction O-ureido-D-serine + ATP + H2O + H(+) = D-cycloserine + NH4(+) + ADP + phosphate + CO2. In terms of biological role, involved in the biosynthesis of the antibiotic D-cycloserine (DCS), a cyclic structural analog of D-alanine, used as an antitubercular agent. Catalyzes the synthesis of D-cycloserine from O-ureido-D-serine (D-OUS). It reacts with D-OUS, D-homocysteine and beta-aminooxy-D-alanine. The sequence is that of Cycloserine biosynthesis protein DcsG from Streptomyces lavendulae.